Consider the following 125-residue polypeptide: UPF0102 protein PSPA7_4996 (125 aa).

It belongs to the UPF0102 family.

This is UPF0102 protein PSPA7_4996 from Pseudomonas paraeruginosa (strain DSM 24068 / PA7) (Pseudomonas aeruginosa (strain PA7)).